The chain runs to 678 residues: Auxin response factor 7 (678 aa).

The TF-B3 DNA-binding region spans 128-230 (FCKTLTASDT…ELRVGVRRLM (103 aa)). Disordered stretches follow at residues 360–386 (AVSN…NSIA) and 502–547 (GVGQ…SRQV). The region spanning 548-641 (RSCTKVIMQG…EAKQLTPKSK (94 aa)) is the PB1 domain. Residues 643-678 (PIIGDAIKPNPNKQSPESDMPHSDLDSTAPVTDKDC) are disordered.

This sequence belongs to the ARF family. Homodimers and heterodimers. As to expression, expressed in roots, culms, leaves and young panicles.

Its subcellular location is the nucleus. Functionally, auxin response factors (ARFs) are transcriptional factors that bind specifically to the DNA sequence 5'-TGTCTC-3' found in the auxin-responsive promoter elements (AuxREs). In Oryza sativa subsp. japonica (Rice), this protein is Auxin response factor 7 (ARF7).